The following is a 348-amino-acid chain: tRNA N6-adenosine threonylcarbamoyltransferase (348 aa).

Positions 109 and 113 each coordinate Fe cation. Substrate is bound by residues 136–140, Asp-169, Gly-182, Asp-186, and Asn-284; that span reads TVSGG. Residue Asp-312 coordinates Fe cation.

The protein belongs to the KAE1 / TsaD family. Requires Fe(2+) as cofactor.

It is found in the cytoplasm. The catalysed reaction is L-threonylcarbamoyladenylate + adenosine(37) in tRNA = N(6)-L-threonylcarbamoyladenosine(37) in tRNA + AMP + H(+). Required for the formation of a threonylcarbamoyl group on adenosine at position 37 (t(6)A37) in tRNAs that read codons beginning with adenine. Is involved in the transfer of the threonylcarbamoyl moiety of threonylcarbamoyl-AMP (TC-AMP) to the N6 group of A37, together with TsaE and TsaB. TsaD likely plays a direct catalytic role in this reaction. The polypeptide is tRNA N6-adenosine threonylcarbamoyltransferase (Chlorobium luteolum (strain DSM 273 / BCRC 81028 / 2530) (Pelodictyon luteolum)).